Here is a 236-residue protein sequence, read N- to C-terminus: Probable calcium-binding protein CML30 (236 aa).

A disordered region spans residues valine 43–leucine 64. Residues lysine 49 to proline 60 show a composition bias toward basic and acidic residues. EF-hand domains follow at residues aspartate 59 to alanine 94 and serine 96 to arginine 131. Ca(2+) contacts are provided by aspartate 72, aspartate 74, aspartate 76, glutamate 83, aspartate 109, asparagine 111, aspartate 113, and glutamate 120. Residues lysine 130–glutamate 158 form a disordered region. Residues alanine 146–glutamate 158 are compositionally biased toward acidic residues. 2 EF-hand domains span residues glutamate 161 to arginine 196 and proline 202 to alanine 236. 9 residues coordinate Ca(2+): aspartate 174, asparagine 176, aspartate 178, glutamate 185, aspartate 215, aspartate 217, aspartate 219, methionine 221, and glutamate 226.

Functionally, potential calcium sensor. The protein is Probable calcium-binding protein CML30 (CML30) of Oryza sativa subsp. japonica (Rice).